The primary structure comprises 136 residues: Acyl carrier protein 2, chloroplastic (136 aa).

A chloroplast-targeting transit peptide spans 1-51 (MASIAASASISLQARPRQLAIAASQVKSFSNGRRSSLSFNLRQLPTRLTVS). One can recognise a Carrier domain in the interval 56–131 (PETVDKVCAV…QAAALIEELL (76 aa)). S91 carries the O-(pantetheine 4'-phosphoryl)serine modification.

It belongs to the acyl carrier protein (ACP) family. 4'-phosphopantetheine is transferred from CoA to a specific serine of apo-ACP by acpS. This modification is essential for activity because fatty acids are bound in thioester linkage to the sulfhydryl of the prosthetic group.

The protein localises to the plastid. It localises to the chloroplast. In terms of biological role, carrier of the growing fatty acid chain in fatty acid biosynthesis. The polypeptide is Acyl carrier protein 2, chloroplastic (ACP2) (Arabidopsis thaliana (Mouse-ear cress)).